A 104-amino-acid chain; its full sequence is UPF0235 protein Sfri_2863 (104 aa).

It belongs to the UPF0235 family.

The chain is UPF0235 protein Sfri_2863 from Shewanella frigidimarina (strain NCIMB 400).